The sequence spans 196 residues: Nucleoside triphosphate pyrophosphatase (196 aa).

Aspartate 73 functions as the Proton acceptor in the catalytic mechanism.

The protein belongs to the Maf family. The cofactor is a divalent metal cation.

The protein resides in the cytoplasm. The catalysed reaction is a ribonucleoside 5'-triphosphate + H2O = a ribonucleoside 5'-phosphate + diphosphate + H(+). It catalyses the reaction a 2'-deoxyribonucleoside 5'-triphosphate + H2O = a 2'-deoxyribonucleoside 5'-phosphate + diphosphate + H(+). Nucleoside triphosphate pyrophosphatase. May have a dual role in cell division arrest and in preventing the incorporation of modified nucleotides into cellular nucleic acids. The polypeptide is Nucleoside triphosphate pyrophosphatase (Chlamydia pneumoniae (Chlamydophila pneumoniae)).